Here is a 205-residue protein sequence, read N- to C-terminus: Dephospho-CoA kinase (205 aa).

One can recognise a DPCK domain in the interval Arg13–Leu205. Ala21 to Thr26 contributes to the ATP binding site.

This sequence belongs to the CoaE family.

It is found in the cytoplasm. The enzyme catalyses 3'-dephospho-CoA + ATP = ADP + CoA + H(+). It functions in the pathway cofactor biosynthesis; coenzyme A biosynthesis; CoA from (R)-pantothenate: step 5/5. In terms of biological role, catalyzes the phosphorylation of the 3'-hydroxyl group of dephosphocoenzyme A to form coenzyme A. In Prochlorococcus marinus (strain MIT 9312), this protein is Dephospho-CoA kinase.